The primary structure comprises 896 residues: Translation initiation factor IF-2 (896 aa).

The segment at 1-260 is disordered; the sequence is MDIENTNKPD…AQTNKKAHKA (260 aa). Positions 19–34 are enriched in basic and acidic residues; it reads KAADSKPESGKTDSKR. The segment covering 56–66 has biased composition (low complexity); the sequence is EESSGGKASGK. A compositionally biased stretch (basic and acidic residues) spans 85-136; the sequence is SVKEKKPDERLEETKKTAPRFEDKKSDAPSAQNEKRSFDSAKKEEKQTERKK. A compositionally biased stretch (low complexity) spans 168 to 177; the sequence is RGQGNRPQRP. The 170-residue stretch at 375–544 folds into the tr-type G domain; it reads PRPPVVTIMG…LLQAEVLELK (170 aa). The interval 384–391 is G1; it reads GHVDHGKT. A GTP-binding site is contributed by 384–391; that stretch reads GHVDHGKT. Positions 409–413 are G2; the sequence is GITQH. The interval 430–433 is G3; that stretch reads DTPG. GTP-binding positions include 430 to 434 and 484 to 487; these read DTPGH and NKVD. The G4 stretch occupies residues 484–487; that stretch reads NKVD. The G5 stretch occupies residues 520-522; the sequence is SAL. The interval 877–896 is disordered; that stretch reads SDSEKYKAPEIKEEGTETDE.

The protein belongs to the TRAFAC class translation factor GTPase superfamily. Classic translation factor GTPase family. IF-2 subfamily.

Its subcellular location is the cytoplasm. One of the essential components for the initiation of protein synthesis. Protects formylmethionyl-tRNA from spontaneous hydrolysis and promotes its binding to the 30S ribosomal subunits. Also involved in the hydrolysis of GTP during the formation of the 70S ribosomal complex. This chain is Translation initiation factor IF-2, found in Treponema denticola (strain ATCC 35405 / DSM 14222 / CIP 103919 / JCM 8153 / KCTC 15104).